We begin with the raw amino-acid sequence, 177 residues long: ATP-dependent protease subunit HslV (177 aa).

The active site involves Thr-5. Positions 161, 164, and 167 each coordinate Na(+).

The protein belongs to the peptidase T1B family. HslV subfamily. As to quaternary structure, a double ring-shaped homohexamer of HslV is capped on each side by a ring-shaped HslU homohexamer. The assembly of the HslU/HslV complex is dependent on binding of ATP.

The protein localises to the cytoplasm. It carries out the reaction ATP-dependent cleavage of peptide bonds with broad specificity.. With respect to regulation, allosterically activated by HslU binding. Protease subunit of a proteasome-like degradation complex believed to be a general protein degrading machinery. The sequence is that of ATP-dependent protease subunit HslV from Campylobacter concisus (strain 13826).